The primary structure comprises 411 residues: Na(+)-translocating NADH-quinone reductase subunit F (411 aa).

A helical membrane pass occupies residues 5-25 (VILALGIAAFTVIVLVLVAII). Residues 36 to 130 (GDITIDINDD…NMEVELPEEI (95 aa)) form the 2Fe-2S ferredoxin-type domain. [2Fe-2S] cluster contacts are provided by cysteine 73, cysteine 79, cysteine 82, and cysteine 114. In terms of domain architecture, FAD-binding FR-type spans 133-273 (VKKWECTVIS…SGPFGEFFAK (141 aa)).

This sequence belongs to the NqrF family. Composed of six subunits; NqrA, NqrB, NqrC, NqrD, NqrE and NqrF. It depends on [2Fe-2S] cluster as a cofactor. Requires FAD as cofactor.

It localises to the cell inner membrane. It catalyses the reaction a ubiquinone + n Na(+)(in) + NADH + H(+) = a ubiquinol + n Na(+)(out) + NAD(+). Functionally, NQR complex catalyzes the reduction of ubiquinone-1 to ubiquinol by two successive reactions, coupled with the transport of Na(+) ions from the cytoplasm to the periplasm. The first step is catalyzed by NqrF, which accepts electrons from NADH and reduces ubiquinone-1 to ubisemiquinone by a one-electron transfer pathway. In Haemophilus influenzae (strain 86-028NP), this protein is Na(+)-translocating NADH-quinone reductase subunit F.